Consider the following 287-residue polypeptide: ATP synthase gamma chain (287 aa).

Belongs to the ATPase gamma chain family. As to quaternary structure, F-type ATPases have 2 components, CF(1) - the catalytic core - and CF(0) - the membrane proton channel. CF(1) has five subunits: alpha(3), beta(3), gamma(1), delta(1), epsilon(1). CF(0) has three main subunits: a, b and c.

It localises to the cell inner membrane. Functionally, produces ATP from ADP in the presence of a proton gradient across the membrane. The gamma chain is believed to be important in regulating ATPase activity and the flow of protons through the CF(0) complex. The chain is ATP synthase gamma chain from Tolumonas auensis (strain DSM 9187 / NBRC 110442 / TA 4).